Consider the following 146-residue polypeptide: 3-hydroxyacyl-[acyl-carrier-protein] dehydratase FabZ (146 aa).

Residue His-49 is part of the active site.

The protein belongs to the thioester dehydratase family. FabZ subfamily.

The protein resides in the cytoplasm. It catalyses the reaction a (3R)-hydroxyacyl-[ACP] = a (2E)-enoyl-[ACP] + H2O. Functionally, involved in unsaturated fatty acids biosynthesis. Catalyzes the dehydration of short chain beta-hydroxyacyl-ACPs and long chain saturated and unsaturated beta-hydroxyacyl-ACPs. In Pseudomonas fluorescens (strain ATCC BAA-477 / NRRL B-23932 / Pf-5), this protein is 3-hydroxyacyl-[acyl-carrier-protein] dehydratase FabZ.